Here is a 286-residue protein sequence, read N- to C-terminus: tRNA (guanine-N(7)-)-methyltransferase (286 aa).

S-adenosyl-L-methionine contacts are provided by Glu91, Glu116, Asn143, and Asp165. The active site involves Asp165. Substrate-binding positions include Lys169, Asp201, and 262–265 (TNFE).

Belongs to the class I-like SAM-binding methyltransferase superfamily. TrmB family.

The enzyme catalyses guanosine(46) in tRNA + S-adenosyl-L-methionine = N(7)-methylguanosine(46) in tRNA + S-adenosyl-L-homocysteine. Its pathway is tRNA modification; N(7)-methylguanine-tRNA biosynthesis. In terms of biological role, catalyzes the formation of N(7)-methylguanine at position 46 (m7G46) in tRNA. The sequence is that of tRNA (guanine-N(7)-)-methyltransferase from Bifidobacterium longum subsp. infantis (strain ATCC 15697 / DSM 20088 / JCM 1222 / NCTC 11817 / S12).